The sequence spans 600 residues: MGHVNLPASKRGNPRQWRLLDIVTAAFFGIVLLFFILLFTPLGDSMAASGRQTLLLSTASDPRQRQRLVTLVEAGQHLQPIEYCPAEAVAHMPCEDPRRNSQLSREMNFYRERHCPLPEETPLCLIPPPSGYKIPVPWPESLHKIWHANMPYNKIADRKGHQGWMKREGEYFTFPGGGTMFPGGAGQYIEKLAQYIPLNGGTLRTALDMGCGVASFGGTLLSQGILALSFAPRDSHKSQIQFALERGVPAFVAMLGTRRLPFPAYSFDLMHCSRCLIPFTAYNATYFIEVDRLLRPGGYLVISGPPVQWPKQDKEWADLQAVARALCYELIAVDGNTVIWKKPVGDSCLPSQNEFGLELCDESVPPSDAWYFKLKRCVTRPSSVKGEHALGTISKWPERLTKVPSRAIVMKNGLDVFEADARRWARRVAYYRDSLNLKLKSPTVRNVMDMNAFFGGFAATLASDPVWVMNVIPARKPLTLDVIYDRGLIGVYHDWCEPFSTYPRTYDFIHVSGIESLIKRQDSSKSRCSLVDLMVEMDRILRPEGKVVIRDSPEVLDKVARMAHAVRWSSSIHEKEPESHGREKILIATKSLWKLPSNSH.

The Cytoplasmic portion of the chain corresponds to 1–18 (MGHVNLPASKRGNPRQWR). A helical; Signal-anchor for type II membrane protein membrane pass occupies residues 19–39 (LLDIVTAAFFGIVLLFFILLF). Residues 40–600 (TPLGDSMAAS…SLWKLPSNSH (561 aa)) lie on the Lumenal side of the membrane. A glycan (N-linked (GlcNAc...) asparagine) is linked at asparagine 283.

Belongs to the methyltransferase superfamily. Highly expressed and abundant in suspension-cultured cells, but low levels in seedlings.

The protein localises to the golgi apparatus membrane. It participates in glycan metabolism; pectin biosynthesis. Functionally, S-adenosyl-L-methionine (SAM)-dependent methyltransferase (MTase) which mediates the methylesterification of the pectin homogalacturonan (HG) and thus regulates cell wall biosynthesis, at least in suspension-cultured cells. The polypeptide is Probable pectin methyltransferase QUA3 (Arabidopsis thaliana (Mouse-ear cress)).